We begin with the raw amino-acid sequence, 197 residues long: Xanthine phosphoribosyltransferase (197 aa).

Residues leucine 20 and asparagine 27 each contribute to the xanthine site. 128-132 (ANGQA) contributes to the 5-phospho-alpha-D-ribose 1-diphosphate binding site. Lysine 156 is a xanthine binding site.

Belongs to the purine/pyrimidine phosphoribosyltransferase family. Xpt subfamily. Homodimer.

The protein localises to the cytoplasm. The enzyme catalyses XMP + diphosphate = xanthine + 5-phospho-alpha-D-ribose 1-diphosphate. It participates in purine metabolism; XMP biosynthesis via salvage pathway; XMP from xanthine: step 1/1. Functionally, converts the preformed base xanthine, a product of nucleic acid breakdown, to xanthosine 5'-monophosphate (XMP), so it can be reused for RNA or DNA synthesis. The protein is Xanthine phosphoribosyltransferase of Bacillus cereus (strain ATCC 14579 / DSM 31 / CCUG 7414 / JCM 2152 / NBRC 15305 / NCIMB 9373 / NCTC 2599 / NRRL B-3711).